The following is a 681-amino-acid chain: MIDRYKHQQLRIGSVSPQQISAWATKILPNGEIVGEVTKPYTFHYKTNKPEKDGLFCERIFGPIKSGICACGNYRVIGDEKEDPKFCEQCGVEFVDSRIRRYQMGYIKLACPVTHVWYLKRLPSYIANLLDKPLKELEGLVYCDFSFARPITKKPTFLRLRGLFEYEIQSWKYSIPLFFTTQGFDTFRNREISTGAGAIREQLADLDLRIIIENSLVEWEELGEEGHTGNEWEDRKVGRRKDFLVRRVELAKHFIRTNIEPEWMVLCLLPVLPPELRPIIQIDGGKLMSSDINELYRRVIYRNNTLTDLLTTSRSTPGELVMCQEKLVQEAVDTLLDNGIRGQPMRDGHNKVYKSFSDVIEGKEGRFRETLLGKRVDYSGRSVIVVGPSLSLHRCGLPREIAIELFQTFVIRGLIRQHLASNIGVAKSKIREKEPIVWEILQEVMQGHPVLLNRAPTLHRLGIQAFQPVLVEGRAICLHPLVCKGFNADFDGDQMAVHVPLSLEAQVEARLLMFSHMNLLSPAIGDPISVPTQDMLIGLYVLTSGNRRGICVNRYNPCNRRNYQNQKRSDNSYYKYTKEPFFSNSYDAIGAYRQKRINLDSPLWLRWRLDQRVIASRETPIEVHYESLGTFYEIYGHYLIVRSLKKQILFIYIRTTVGHIALYREIEEAIQGFSRAYSYGT.

4 residues coordinate Zn(2+): Cys-69, Cys-71, Cys-87, and Cys-90. Mg(2+) contacts are provided by Asp-489, Asp-491, and Asp-493.

This sequence belongs to the RNA polymerase beta' chain family. RpoC1 subfamily. In terms of assembly, in plastids the minimal PEP RNA polymerase catalytic core is composed of four subunits: alpha, beta, beta', and beta''. When a (nuclear-encoded) sigma factor is associated with the core the holoenzyme is formed, which can initiate transcription. Requires Mg(2+) as cofactor. Zn(2+) serves as cofactor.

Its subcellular location is the plastid. It is found in the chloroplast. It carries out the reaction RNA(n) + a ribonucleoside 5'-triphosphate = RNA(n+1) + diphosphate. Functionally, DNA-dependent RNA polymerase catalyzes the transcription of DNA into RNA using the four ribonucleoside triphosphates as substrates. The protein is DNA-directed RNA polymerase subunit beta' of Atropa belladonna (Belladonna).